Here is a 240-residue protein sequence, read N- to C-terminus: Tetrahydromethanopterin S-methyltransferase subunit A (240 aa).

Residues 1–218 (MAEKREPAAG…KFHAGVHAGK (218 aa)) lie on the Cytoplasmic side of the membrane. Residue His85 coordinates 5-hydroxybenzimidazolylcob(I)amide. A helical membrane pass occupies residues 219-239 (FEGIMIGLAITLSLLGLILFG). Residue Arg240 is a topological domain, extracellular.

Belongs to the MtrA family. In terms of assembly, the complex is composed of 8 subunits; MtrA, MtrB, MtrC, MtrD, MtrE, MtrF, MtrG and MtrH. It depends on 5-hydroxybenzimidazolylcob(I)amide as a cofactor.

The protein localises to the cell membrane. It carries out the reaction 5-methyl-5,6,7,8-tetrahydromethanopterin + coenzyme M + 2 Na(+)(in) = 5,6,7,8-tetrahydromethanopterin + methyl-coenzyme M + 2 Na(+)(out). Its pathway is one-carbon metabolism; methanogenesis from CO(2); methyl-coenzyme M from 5,10-methylene-5,6,7,8-tetrahydromethanopterin: step 2/2. Functionally, part of a complex that catalyzes the formation of methyl-coenzyme M and tetrahydromethanopterin from coenzyme M and methyl-tetrahydromethanopterin. This is an energy-conserving, sodium-ion translocating step. The chain is Tetrahydromethanopterin S-methyltransferase subunit A from Methanohalophilus mahii (strain ATCC 35705 / DSM 5219 / SLP).